A 401-amino-acid chain; its full sequence is 1-deoxy-D-xylulose 5-phosphate reductoisomerase (401 aa).

NADPH is bound by residues Thr-11, Gly-12, Ser-13, Ile-14, Arg-38, Asn-39, and Asn-125. 1-deoxy-D-xylulose 5-phosphate is bound at residue Lys-126. NADPH is bound at residue Glu-127. Residue Asp-151 participates in Mn(2+) binding. The 1-deoxy-D-xylulose 5-phosphate site is built by Ser-152, Glu-153, Ser-179, and His-202. Glu-153 is a binding site for Mn(2+). Gly-208 provides a ligand contact to NADPH. Ser-215, Asn-220, Lys-221, and Glu-224 together coordinate 1-deoxy-D-xylulose 5-phosphate. Glu-224 provides a ligand contact to Mn(2+).

It belongs to the DXR family. Mg(2+) is required as a cofactor. Mn(2+) serves as cofactor.

It catalyses the reaction 2-C-methyl-D-erythritol 4-phosphate + NADP(+) = 1-deoxy-D-xylulose 5-phosphate + NADPH + H(+). Its pathway is isoprenoid biosynthesis; isopentenyl diphosphate biosynthesis via DXP pathway; isopentenyl diphosphate from 1-deoxy-D-xylulose 5-phosphate: step 1/6. Its function is as follows. Catalyzes the NADPH-dependent rearrangement and reduction of 1-deoxy-D-xylulose-5-phosphate (DXP) to 2-C-methyl-D-erythritol 4-phosphate (MEP). This is 1-deoxy-D-xylulose 5-phosphate reductoisomerase from Paraburkholderia phytofirmans (strain DSM 17436 / LMG 22146 / PsJN) (Burkholderia phytofirmans).